We begin with the raw amino-acid sequence, 175 residues long: B9 domain-containing protein 2 (175 aa).

One can recognise a C2 B9-type domain in the interval 2 to 118 (AEVHVIGQII…ACPTWRPLGS (117 aa)).

The protein belongs to the B9D family. In terms of assembly, part of the tectonic-like complex (also named B9 complex). Interacts with TUBG1.

It is found in the cytoplasm. The protein localises to the cytoskeleton. Its subcellular location is the cilium basal body. It localises to the cilium axoneme. The protein resides in the nucleus. Component of the tectonic-like complex, a complex localized at the transition zone of primary cilia and acting as a barrier that prevents diffusion of transmembrane proteins between the cilia and plasma membranes. The protein is B9 domain-containing protein 2 (B9D2) of Homo sapiens (Human).